Reading from the N-terminus, the 227-residue chain is 7-cyano-7-deazaguanine synthase (227 aa).

9–19 is an ATP binding site; sequence LSGGLDSATVL. 4 residues coordinate Zn(2+): cysteine 189, cysteine 199, cysteine 202, and cysteine 205.

This sequence belongs to the QueC family. Zn(2+) is required as a cofactor.

It catalyses the reaction 7-carboxy-7-deazaguanine + NH4(+) + ATP = 7-cyano-7-deazaguanine + ADP + phosphate + H2O + H(+). It participates in purine metabolism; 7-cyano-7-deazaguanine biosynthesis. Functionally, catalyzes the ATP-dependent conversion of 7-carboxy-7-deazaguanine (CDG) to 7-cyano-7-deazaguanine (preQ(0)). In Cupriavidus metallidurans (strain ATCC 43123 / DSM 2839 / NBRC 102507 / CH34) (Ralstonia metallidurans), this protein is 7-cyano-7-deazaguanine synthase.